The primary structure comprises 319 residues: ATP-dependent 6-phosphofructokinase (319 aa).

Gly-11 serves as a coordination point for ATP. An ADP-binding site is contributed by 21–25 (RAVVR). Residues 72–73 (RS) and 102–105 (GDGS) contribute to the ATP site. Residue Asp-103 participates in Mg(2+) binding. 125–127 (TID) is a binding site for substrate. Asp-127 (proton acceptor) is an active-site residue. An ADP-binding site is contributed by Arg-154. Substrate is bound by residues Arg-162 and 169–171 (MGR). Residues 185 to 187 (GAE) and 213 to 215 (KMH) contribute to the ADP site. Substrate is bound by residues Glu-222, Arg-243, and 249–252 (HIQR).

This sequence belongs to the phosphofructokinase type A (PFKA) family. ATP-dependent PFK group I subfamily. Prokaryotic clade 'B1' sub-subfamily. Homotetramer. Mg(2+) serves as cofactor.

It localises to the cytoplasm. The enzyme catalyses beta-D-fructose 6-phosphate + ATP = beta-D-fructose 1,6-bisphosphate + ADP + H(+). It functions in the pathway carbohydrate degradation; glycolysis; D-glyceraldehyde 3-phosphate and glycerone phosphate from D-glucose: step 3/4. With respect to regulation, allosterically activated by ADP and other diphosphonucleosides, and allosterically inhibited by phosphoenolpyruvate. Catalyzes the phosphorylation of D-fructose 6-phosphate to fructose 1,6-bisphosphate by ATP, the first committing step of glycolysis. In Clostridium tetani (strain Massachusetts / E88), this protein is ATP-dependent 6-phosphofructokinase.